Here is a 394-residue protein sequence, read N- to C-terminus: Cell adhesion molecule 3 (394 aa).

Positions 1-17 (MHHPVILLLCLSSLAGA) are cleaved as a signal peptide. Over 18–326 (ANLPPEDLSQ…PIPSTSSIDH (309 aa)) the chain is Extracellular. One can recognise an Ig-like V-type domain in the interval 22–120 (PEDLSQPVTA…PVRTAKAVVT (99 aa)). 2 disulfides stabilise this stretch: cysteine 45/cysteine 105 and cysteine 147/cysteine 204. Ig-like C2-type domains follow at residues 128 to 223 (PQVS…HKIQ) and 228 to 306 (PTAK…TFIT). Residues 217–240 (SSSHKIQVQYKPTAKIESRPSMPR) are disordered. Over residues 230 to 240 (AKIESRPSMPR) the composition is skewed to basic and acidic residues. Cysteine 249 and cysteine 295 are disulfide-bonded. A helical membrane pass occupies residues 327–347 (AVIGGVVAVIAFLLFCLLIVL). Over 348 to 394 (GRYLIRHKGTYLTHEAKGSDDAPDADTAIINAEGGQGGSDDKKEYFI) the chain is Cytoplasmic. Positions 363-394 (AKGSDDAPDADTAIINAEGGQGGSDDKKEYFI) are disordered.

Belongs to the nectin family.

Its subcellular location is the cell membrane. It localises to the cell junction. Functionally, may be involved in cell-cell adhesion. The sequence is that of Cell adhesion molecule 3 (cadm3) from Xenopus laevis (African clawed frog).